The sequence spans 323 residues: Methenyltetrahydromethanopterin cyclohydrolase (323 aa).

The protein belongs to the MCH family.

It is found in the cytoplasm. The enzyme catalyses 5,10-methenyl-5,6,7,8-tetrahydromethanopterin + H2O = N(5)-formyl-5,6,7,8-tetrahydromethanopterin + H(+). The protein operates within one-carbon metabolism; methanogenesis from CO(2); 5,10-methenyl-5,6,7,8-tetrahydromethanopterin from CO(2): step 3/3. In terms of biological role, catalyzes the reversible interconversion of 5-formyl-H(4)MPT to methenyl-H(4)MPT(+). The protein is Methenyltetrahydromethanopterin cyclohydrolase of Methanococcus maripaludis (strain C5 / ATCC BAA-1333).